The primary structure comprises 194 residues: Large ribosomal subunit protein eL15 (194 aa).

Positions 162–194 (LTSAGRKSRGLRNKGKGAEKVRPSVRANKGKTK) are disordered. A compositionally biased stretch (basic residues) spans 167 to 176 (RKSRGLRNKG).

The protein belongs to the eukaryotic ribosomal protein eL15 family.

The sequence is that of Large ribosomal subunit protein eL15 from Thermococcus onnurineus (strain NA1).